The chain runs to 457 residues: MADLKNLFLITKHPSTTQIFLTSLFFLSLFLLSSSSLSDFSPSLIVSSFTSRLLTAANFFSSPSSYTSSASDTTMFLSSVSPRRINEPKIDSETKELASCDIFDGTWVFDDSEPVYLPGYCPFVEDKFNCFKNGRPDSGFLRHRWQPHGCSIPRFDGKKMLKMLRGKRVVFVGDSLNRNMWESLVCSLRSTLEDKNRVSKIIGKQSNLPNEGFYGFRFNDFECSIDFIKSPFLVQESEVVDVYGKRRETLRLDMIQRSMTKIYKNADIVIFNTGHWWTHQKTYEGKGYYQEGNRVYERLEVKEAYTKAIHTWADWVDSNINSTKTRVFFVGYSSSHFRKGAWNSGGQCDGETRPIQNETYTGVYPWMMKVVESVISEMKTPVFYMNITKMTWYRTDGHPSVYRQPADPRGTSPAAGMYQDCSHWCLPGVPDSWNQLLYATLLVSHGSLPDKSLGSLL.

The chain crosses the membrane as a helical; Signal-anchor for type II membrane protein span at residues 19–37 (IFLTSLFFLSLFLLSSSSL). Residues 173-175 (GDS) carry the GDS motif motif. The DCXHWCLPGXXDXWN motif motif lies at 420 to 434 (DCSHWCLPGVPDSWN).

It belongs to the PC-esterase family. TBL subfamily.

The protein resides in the membrane. May act as a bridging protein that binds pectin and other cell wall polysaccharides. Probably involved in maintaining esterification of pectins. May be involved in the specific O-acetylation of cell wall polymers. The protein is Protein trichome birefringence-like 4 (TBL4) of Arabidopsis thaliana (Mouse-ear cress).